Consider the following 81-residue polypeptide: UPF0434 protein msl4429 (81 aa).

The protein belongs to the UPF0434 family.

The sequence is that of UPF0434 protein msl4429 from Mesorhizobium japonicum (strain LMG 29417 / CECT 9101 / MAFF 303099) (Mesorhizobium loti (strain MAFF 303099)).